Reading from the N-terminus, the 637-residue chain is Biosynthetic arginine decarboxylase (637 aa).

Lys-101 is subject to N6-(pyridoxal phosphate)lysine. 286–296 (FDVGGGLAVDY) serves as a coordination point for substrate.

It belongs to the Orn/Lys/Arg decarboxylase class-II family. SpeA subfamily. The cofactor is Mg(2+). It depends on pyridoxal 5'-phosphate as a cofactor.

It carries out the reaction L-arginine + H(+) = agmatine + CO2. It participates in amine and polyamine biosynthesis; agmatine biosynthesis; agmatine from L-arginine: step 1/1. Functionally, catalyzes the biosynthesis of agmatine from arginine. This Shewanella halifaxensis (strain HAW-EB4) protein is Biosynthetic arginine decarboxylase.